Here is a 306-residue protein sequence, read N- to C-terminus: Lipoyl synthase 2 (306 aa).

The [4Fe-4S] cluster site is built by cysteine 49, cysteine 54, cysteine 60, cysteine 75, cysteine 79, cysteine 82, and serine 300. A Radical SAM core domain is found at 61–289 (YAAGTATFLL…AEVACKLGFA (229 aa)).

Belongs to the radical SAM superfamily. Lipoyl synthase family. The cofactor is [4Fe-4S] cluster.

The protein resides in the cytoplasm. It carries out the reaction [[Fe-S] cluster scaffold protein carrying a second [4Fe-4S](2+) cluster] + N(6)-octanoyl-L-lysyl-[protein] + 2 oxidized [2Fe-2S]-[ferredoxin] + 2 S-adenosyl-L-methionine + 4 H(+) = [[Fe-S] cluster scaffold protein] + N(6)-[(R)-dihydrolipoyl]-L-lysyl-[protein] + 4 Fe(3+) + 2 hydrogen sulfide + 2 5'-deoxyadenosine + 2 L-methionine + 2 reduced [2Fe-2S]-[ferredoxin]. It participates in protein modification; protein lipoylation via endogenous pathway; protein N(6)-(lipoyl)lysine from octanoyl-[acyl-carrier-protein]: step 2/2. Functionally, catalyzes the radical-mediated insertion of two sulfur atoms into the C-6 and C-8 positions of the octanoyl moiety bound to the lipoyl domains of lipoate-dependent enzymes, thereby converting the octanoylated domains into lipoylated derivatives. In Prochlorococcus marinus (strain MIT 9313), this protein is Lipoyl synthase 2.